The chain runs to 199 residues: Protein-methionine-sulfoxide reductase heme-binding subunit MsrQ (199 aa).

A run of 5 helical transmembrane segments spans residues 8–28, 82–102, 116–136, 149–169, and 171–191; these read ITWL…WLFW, LWCF…ELGI, PYLT…LTST, FLHN…LWSV, and ILSP…AWRY.

It belongs to the MsrQ family. As to quaternary structure, heterodimer of a catalytic subunit (MsrP) and a heme-binding subunit (MsrQ). Requires FMN as cofactor. The cofactor is heme b.

It is found in the cell inner membrane. In terms of biological role, part of the MsrPQ system that repairs oxidized periplasmic proteins containing methionine sulfoxide residues (Met-O), using respiratory chain electrons. Thus protects these proteins from oxidative-stress damage caused by reactive species of oxygen and chlorine generated by the host defense mechanisms. MsrPQ is essential for the maintenance of envelope integrity under bleach stress, rescuing a wide series of structurally unrelated periplasmic proteins from methionine oxidation. MsrQ provides electrons for reduction to the reductase catalytic subunit MsrP, using the quinone pool of the respiratory chain. This Enterobacter sp. (strain 638) protein is Protein-methionine-sulfoxide reductase heme-binding subunit MsrQ.